The sequence spans 308 residues: Aspartate carbamoyltransferase catalytic subunit (308 aa).

2 residues coordinate carbamoyl phosphate: Arg-55 and Thr-56. Lys-83 contacts L-aspartate. The carbamoyl phosphate site is built by Arg-105, His-133, and Gln-136. The L-aspartate site is built by Arg-166 and Arg-223. Carbamoyl phosphate is bound by residues Gly-264 and Pro-265.

It belongs to the aspartate/ornithine carbamoyltransferase superfamily. ATCase family. In terms of assembly, heterododecamer (2C3:3R2) of six catalytic PyrB chains organized as two trimers (C3), and six regulatory PyrI chains organized as three dimers (R2).

It carries out the reaction carbamoyl phosphate + L-aspartate = N-carbamoyl-L-aspartate + phosphate + H(+). The protein operates within pyrimidine metabolism; UMP biosynthesis via de novo pathway; (S)-dihydroorotate from bicarbonate: step 2/3. Catalyzes the condensation of carbamoyl phosphate and aspartate to form carbamoyl aspartate and inorganic phosphate, the committed step in the de novo pyrimidine nucleotide biosynthesis pathway. This chain is Aspartate carbamoyltransferase catalytic subunit, found in Salinispora tropica (strain ATCC BAA-916 / DSM 44818 / JCM 13857 / NBRC 105044 / CNB-440).